Consider the following 583-residue polypeptide: Undecaprenyl phosphate-alpha-4-amino-4-deoxy-L-arabinose arabinosyl transferase 2 (583 aa).

The segment at 1–20 is disordered; sequence MTSRIQMHRTSPPPAYGTSA. The next 12 membrane-spanning stretches (helical) occupy residues 42–62, 113–135, 145–165, 166–186, 209–229, 241–261, 290–310, 321–341, 345–365, 380–400, 409–429, and 440–460; these read LLLV…GLWI, LFGV…YLIT, SFAA…AGYS, NLDP…WFAL, FMTK…PYMI, GLVA…SIHA, WWFY…LLPG, QAPT…FSLS, LPTY…SALI, SLLN…IQLT, MLGL…NLLP, and PALG…GFIV.

Belongs to the glycosyltransferase 83 family.

Its subcellular location is the cell inner membrane. It catalyses the reaction 4-amino-4-deoxy-alpha-L-arabinopyranosyl di-trans,octa-cis-undecaprenyl phosphate + lipid IVA = lipid IIA + di-trans,octa-cis-undecaprenyl phosphate.. Its pathway is lipopolysaccharide metabolism; 4-amino-4-deoxy-beta-L-arabinose-lipid A biosynthesis. In terms of biological role, catalyzes the transfer of the L-Ara4N moiety of the glycolipid undecaprenyl phosphate-alpha-L-Ara4N to lipid A. The modified arabinose is attached to lipid A and is required for resistance to polymyxin and cationic antimicrobial peptides. This chain is Undecaprenyl phosphate-alpha-4-amino-4-deoxy-L-arabinose arabinosyl transferase 2, found in Pseudomonas fluorescens (strain ATCC BAA-477 / NRRL B-23932 / Pf-5).